Reading from the N-terminus, the 143-residue chain is S-adenosylmethionine decarboxylase proenzyme (143 aa).

The Schiff-base intermediate with substrate; via pyruvic acid role is filled by Ser66. A Pyruvic acid (Ser); by autocatalysis modification is found at Ser66. The active-site Proton acceptor; for processing activity is the His71. Cys86 serves as the catalytic Proton donor; for catalytic activity.

The protein belongs to the prokaryotic AdoMetDC family. Type 1 subfamily. Heterotetramer of two alpha and two beta chains arranged as a dimer of alpha/beta heterodimers. The cofactor is pyruvate. Is synthesized initially as an inactive proenzyme. Formation of the active enzyme involves a self-maturation process in which the active site pyruvoyl group is generated from an internal serine residue via an autocatalytic post-translational modification. Two non-identical subunits are generated from the proenzyme in this reaction, and the pyruvate is formed at the N-terminus of the alpha chain, which is derived from the carboxyl end of the proenzyme. The post-translation cleavage follows an unusual pathway, termed non-hydrolytic serinolysis, in which the side chain hydroxyl group of the serine supplies its oxygen atom to form the C-terminus of the beta chain, while the remainder of the serine residue undergoes an oxidative deamination to produce ammonia and the pyruvoyl group blocking the N-terminus of the alpha chain.

It catalyses the reaction S-adenosyl-L-methionine + H(+) = S-adenosyl 3-(methylsulfanyl)propylamine + CO2. It functions in the pathway amine and polyamine biosynthesis; S-adenosylmethioninamine biosynthesis; S-adenosylmethioninamine from S-adenosyl-L-methionine: step 1/1. In terms of biological role, catalyzes the decarboxylation of S-adenosylmethionine to S-adenosylmethioninamine (dcAdoMet), the propylamine donor required for the synthesis of the polyamines spermine and spermidine from the diamine putrescine. The sequence is that of S-adenosylmethionine decarboxylase proenzyme from Thermococcus gammatolerans (strain DSM 15229 / JCM 11827 / EJ3).